Consider the following 365-residue polypeptide: GDSL esterase/lipase At3g62280 (365 aa).

The first 25 residues, 1–25 (MDYTVSSLQCFFLVLCLSLLVCSNS), serve as a signal peptide directing secretion. Residue serine 43 is the Nucleophile of the active site. N-linked (GlcNAc...) asparagine glycans are attached at residues asparagine 137, asparagine 178, and asparagine 231. Active-site residues include aspartate 333 and histidine 336.

The protein belongs to the 'GDSL' lipolytic enzyme family.

It is found in the secreted. This Arabidopsis thaliana (Mouse-ear cress) protein is GDSL esterase/lipase At3g62280.